The chain runs to 463 residues: L-seryl-tRNA(Sec) selenium transferase (463 aa).

Residue K295 is modified to N6-(pyridoxal phosphate)lysine.

The protein belongs to the SelA family. As to quaternary structure, homodecamer; pentamer of dimers. Binds only one seryl-tRNA(Sec) per dimer. Pyridoxal 5'-phosphate is required as a cofactor.

Its subcellular location is the cytoplasm. It carries out the reaction L-seryl-tRNA(Sec) + selenophosphate + H(+) = L-selenocysteinyl-tRNA(Sec) + phosphate. The protein operates within aminoacyl-tRNA biosynthesis; selenocysteinyl-tRNA(Sec) biosynthesis; selenocysteinyl-tRNA(Sec) from L-seryl-tRNA(Sec) (bacterial route): step 1/1. Its function is as follows. Converts seryl-tRNA(Sec) to selenocysteinyl-tRNA(Sec) required for selenoprotein biosynthesis. In Escherichia coli O7:K1 (strain IAI39 / ExPEC), this protein is L-seryl-tRNA(Sec) selenium transferase.